A 535-amino-acid chain; its full sequence is Probable monogalactosyldiacylglycerol synthase, chloroplastic (535 aa).

The transit peptide at 1–113 (MMQHSSSVTQ…KIPLGFASVG (113 aa)) directs the protein to the chloroplast.

It belongs to the glycosyltransferase 28 family.

It is found in the plastid. It localises to the chloroplast membrane. It catalyses the reaction a 1,2-diacyl-sn-glycerol + UDP-alpha-D-galactose = a 1,2-diacyl-3-O-(beta-D-galactosyl)-sn-glycerol + UDP + H(+). Its function is as follows. Involved in the synthesis of the major structural component of photosynthetic membranes. The protein is Probable monogalactosyldiacylglycerol synthase, chloroplastic (MGD A) of Nicotiana tabacum (Common tobacco).